The following is a 47-amino-acid chain: uncharacterized protein (47 aa).

An ATP-cone domain is found at 2–47 (LRVRKRDGRLEEFSRAKIVRTCLRAGASKKIAEKVAEELKRGYTMG).

This is an uncharacterized protein from Archaeoglobus fulgidus (strain ATCC 49558 / DSM 4304 / JCM 9628 / NBRC 100126 / VC-16).